The following is a 76-amino-acid chain: uncharacterized protein (76 aa).

The next 3 helical transmembrane spans lie at 1 to 21, 35 to 55, and 56 to 76; these read MTAIIVYSCLTMCVIYFHLQL, CFDIFLLLIEMLKLIFYLLII, and NNKFYIFIIISIALITINTMI.

It localises to the cell membrane. This is an uncharacterized protein from Borreliella burgdorferi (strain ATCC 35210 / DSM 4680 / CIP 102532 / B31) (Borrelia burgdorferi).